Here is an 827-residue protein sequence, read N- to C-terminus: Translation initiation factor IF-2 (827 aa).

Positions 49-205 (ALNREKEEKE…GAPDKKREWE (157 aa)) are disordered. Composition is skewed to basic and acidic residues over residues 50–73 (LNRE…KAEA), 96–106 (RPREQRSDRPQ), 116–129 (PEPR…RPGE), 137–150 (RPRD…KERG), 157–168 (FGEKKERPPFPR), and 182–205 (EAPK…REWE). A tr-type G domain is found at 326 to 495 (PRPPIVTVMG…LLVADLKELK (170 aa)). Positions 335–342 (GHVDHGKT) are G1. 335–342 (GHVDHGKT) is a GTP binding site. Residues 360 to 364 (GITQH) form a G2 region. A G3 region spans residues 381 to 384 (DTPG). Residues 381–385 (DTPGH) and 435–438 (NKID) contribute to the GTP site. The tract at residues 435–438 (NKID) is G4. The G5 stretch occupies residues 471 to 473 (SAL).

It belongs to the TRAFAC class translation factor GTPase superfamily. Classic translation factor GTPase family. IF-2 subfamily.

It localises to the cytoplasm. Functionally, one of the essential components for the initiation of protein synthesis. Protects formylmethionyl-tRNA from spontaneous hydrolysis and promotes its binding to the 30S ribosomal subunits. Also involved in the hydrolysis of GTP during the formation of the 70S ribosomal complex. The chain is Translation initiation factor IF-2 from Carboxydothermus hydrogenoformans (strain ATCC BAA-161 / DSM 6008 / Z-2901).